Here is a 127-residue protein sequence, read N- to C-terminus: Large ribosomal subunit protein bL17 (127 aa).

The protein belongs to the bacterial ribosomal protein bL17 family. As to quaternary structure, part of the 50S ribosomal subunit. Contacts protein L32.

The chain is Large ribosomal subunit protein bL17 from Stenotrophomonas maltophilia (strain K279a).